We begin with the raw amino-acid sequence, 368 residues long: COP9 signalosome complex subunit 5 (368 aa).

One can recognise an MPN domain in the interval 56 to 193; the sequence is IKISAIALLK…IGAFRTYPEG (138 aa). Residues histidine 139, histidine 141, and aspartate 152 each contribute to the Zn(2+) site. A JAMM motif motif is present at residues 139–152; that stretch reads HSHPGYGCWLSGID. Residues 347–368 are disordered; the sequence is TEPEKAGPSPSAPEPAVEMADA.

It belongs to the peptidase M67A family. CSN5 subfamily. As to quaternary structure, component of the CSN complex, probably composed of csn-1, csn-2, csn-3, csn-4, csn-5, csn-6 and csn-7. Within the complex it probably interacts directly with csn-1. Interacts with glh-1 and glh-3. Interacts with lag-1. Interacts with kgb-1. It depends on a divalent metal cation as a cofactor.

Its subcellular location is the cytoplasm. The protein resides in the nucleus. Probable protease subunit of the COP9 signalosome complex (CSN), a complex involved in various cellular and developmental processes. The CSN complex is an essential regulator of the ubiquitin (Ubl) conjugation pathway by mediating the deneddylation of the cullin subunits of the SCF-type E3 ligase complexes, leading to decrease the Ubl ligase activity of SCF. In the complex, it probably acts as the catalytic center that mediates the cleavage of Nedd8 from cullins. It however has no metalloprotease activity by itself and requires the other subunits of the CSN complex. The CSN complex plays an essential role in embryogenesis and oogenesis and is required to regulate microtubule stability in the early embryo. Mediates mei-3/katanin targeting for degradation at the meiosis to mitosis transition via deneddylation of cul-3. May stabilize glh-1 protein levels by antagonizing kgb-1. The polypeptide is COP9 signalosome complex subunit 5 (csn-5) (Caenorhabditis elegans).